The chain runs to 715 residues: Polyribonucleotide nucleotidyltransferase (715 aa).

Residues Asp493 and Asp499 each coordinate Mg(2+). The region spanning Pro560–Ile619 is the KH domain. The S1 motif domain occupies Gly629–Lys697.

Belongs to the polyribonucleotide nucleotidyltransferase family. Mg(2+) serves as cofactor.

Its subcellular location is the cytoplasm. The enzyme catalyses RNA(n+1) + phosphate = RNA(n) + a ribonucleoside 5'-diphosphate. Its function is as follows. Involved in mRNA degradation. Catalyzes the phosphorolysis of single-stranded polyribonucleotides processively in the 3'- to 5'-direction. The protein is Polyribonucleotide nucleotidyltransferase of Burkholderia lata (strain ATCC 17760 / DSM 23089 / LMG 22485 / NCIMB 9086 / R18194 / 383).